We begin with the raw amino-acid sequence, 115 residues long: Large ribosomal subunit protein bL19 (115 aa).

Belongs to the bacterial ribosomal protein bL19 family.

In terms of biological role, this protein is located at the 30S-50S ribosomal subunit interface and may play a role in the structure and function of the aminoacyl-tRNA binding site. This chain is Large ribosomal subunit protein bL19, found in Oleidesulfovibrio alaskensis (strain ATCC BAA-1058 / DSM 17464 / G20) (Desulfovibrio alaskensis).